Here is a 363-residue protein sequence, read N- to C-terminus: MTSVSPRYRNVPVPKVFLSFRGEEIRHGFISHLADALERYGIMFIIDKDEQRGNDLTSLLLRIKESKVALVIFSSRFAESRFCMDEIVKMKECVDERKLLVIPIFYKVRARDVSGRTGDFGKKFWALAQKSRGCQIKEWMEALECISNKMGLSLGDGRSEADFIKEIVKEVERVLATFTSEDTEDHHCQTVKLLKGLVVGCLAHQELPLVLVFTQVYYYVKFSIFFIEEIFSSCFRKGFVLKPCKEDLQINSISIPGIDLENFKNMMQQAMYELNQMLLQSLGNIDPHRDVAFENQPQDQPDSPIALPEERRVALEATKFCGHAAYWWNQTKTTRARIGKVLIHFWEKLKKKFKDTYDRTVRI.

The region spanning 12 to 175 (PVPKVFLSFR…EIVKEVERVL (164 aa)) is the TIR domain. NAD(+) is bound by residues 21–26 (RGEEIR) and G53. The active site involves E86.

In terms of assembly, homooligomer; homooligomerization is required for activity.

It is found in the cytoplasm. The protein localises to the nucleus. Its subcellular location is the nucleoplasm. It catalyses the reaction NAD(+) + H2O = ADP-D-ribose + nicotinamide + H(+). The enzyme catalyses NADP(+) + H2O = ADP-D-ribose 2'-phosphate + nicotinamide + H(+). Disease resistance (R) protein that specifically recognizes the HopBA1 type III effector protein from P.syringae, and triggers cell death. Acts as a NAD(+) hydrolase (NADase): in response to pathogen-recognition, catalyzes cleavage of NAD(+) into ADP-D-ribose (ADPR) and nicotinamide; NAD(+) cleavage triggering a defense system that promotes cell death. In addition to ADPR, also generates a cyclization variant of cyclic ADPR (cADPR), termed v-cADPR, for which the cyclizing bond is unknown. Also able to hydrolyze NADP(+), but not other NAD(+)-related molecules. This is Disease resistance protein RBA1 from Arabidopsis thaliana (Mouse-ear cress).